A 318-amino-acid chain; its full sequence is MDSGETLTFQALILTLQNYWASRGCVVLQPYDMEVGAGTFHTATFLRALTPERWNTAYVQPSRRPTDGRYGDNPNRLQHYYQFQVVLKPNPANIQELYLGSLKAIGIDTLTHDVRFVEDNWESPTLGAWGLGWEVWLNGMEVTQFTYFQQVGGIECFPVTGEITYGLERLAMYIQGVDSVYDLVWADGEFGRVTYGDVFHQNEVEQSAYNFEHADVAKLFELFDFYEEQADKLVAVNLPLPAYEMVLKASHAFNLLDARGAISVTERQRFILRVRTLARKVAISYTEARAKLGFPLADDAHKAEALEKWLPKEPKIIL.

The protein belongs to the class-II aminoacyl-tRNA synthetase family. In terms of assembly, tetramer of two alpha and two beta subunits.

The protein resides in the cytoplasm. It carries out the reaction tRNA(Gly) + glycine + ATP = glycyl-tRNA(Gly) + AMP + diphosphate. This Moraxella catarrhalis (Branhamella catarrhalis) protein is Glycine--tRNA ligase alpha subunit (glyQ).